The sequence spans 102 residues: Large ribosomal subunit protein uL24c (102 aa).

This sequence belongs to the universal ribosomal protein uL24 family. As to quaternary structure, part of the 50S ribosomal subunit.

Its subcellular location is the plastid. The protein resides in the chloroplast. Its function is as follows. One of two assembly initiator proteins, it binds directly to the 5'-end of the 23S rRNA, where it nucleates assembly of the 50S subunit. The protein is Large ribosomal subunit protein uL24c (rpl24) of Rhodomonas salina (Cryptomonas salina).